The following is a 440-amino-acid chain: Chromosome partition protein MukF (440 aa).

The leucine-zipper stretch occupies residues 208–236 (LSETSGTLRELQDTLEAAGDKLQANLLRI).

Belongs to the MukF family. As to quaternary structure, interacts, and probably forms a ternary complex, with MukE and MukB via its C-terminal region. The complex formation is stimulated by calcium or magnesium. It is required for an interaction between MukE and MukB.

The protein resides in the cytoplasm. The protein localises to the nucleoid. Functionally, involved in chromosome condensation, segregation and cell cycle progression. May participate in facilitating chromosome segregation by condensation DNA from both sides of a centrally located replisome during cell division. Not required for mini-F plasmid partitioning. Probably acts via its interaction with MukB and MukE. Overexpression results in anucleate cells. It has a calcium binding activity. This Shigella boydii serotype 4 (strain Sb227) protein is Chromosome partition protein MukF.